The chain runs to 529 residues: Delayed-rectifier potassium channel regulatory subunit KCNS1 (529 aa).

The Cytoplasmic portion of the chain corresponds to 1-217 (MLMLLVRGTH…LTMENPGYSL (217 aa)). The helical transmembrane segment at 218 to 239 (PSKLFSCVSISVVLASIAAMCI) threads the bilayer. The Extracellular portion of the chain corresponds to 240–270 (HSLPEYQAREAAAAVAAVAAGRSPEGVRDDP). A helical membrane pass occupies residues 271-293 (VLRRLEYFCIAWFSFEVSSRLLL). The Cytoplasmic segment spans residues 294 to 304 (APSTRNFFCHP). The chain crosses the membrane as a helical span at residues 305 to 322 (LNLIDIVSVLPFYLTLLA). The Extracellular portion of the chain corresponds to 323–340 (GVALGDQGGTGGKELGHL). A helical; Voltage-sensor membrane pass occupies residues 341–361 (GKVVQVFRLMRIFRVLKLARH). Over 362–376 (STGLRSLGATLKHSY) the chain is Cytoplasmic. The chain crosses the membrane as a helical span at residues 377–398 (REVGILLLYLAVGVSVFSGVAY). Residues 399–411 (TAEKEEDVGFNTI) lie on the Extracellular side of the membrane. Positions 412 to 423 (PACWWWGTVSMT) form an intramembrane region, helical. The short motif at 424–429 (TVGYGD) is the Selectivity filter element. An intramembrane segment occupies 424–431 (TVGYGDVV). Residues 432–438 (PVTVAGK) are Extracellular-facing. Residues 439–467 (LAASGCILGGILVVALPITIIFNKFSHFY) form a helical membrane-spanning segment. Over 468–529 (RRQKALEAAV…PSEPPHPQMY (62 aa)) the chain is Cytoplasmic. The disordered stretch occupies residues 496-529 (SEASLETSRETSQEGRSADLETQAPSEPPHPQMY). Residues 502–514 (TSRETSQEGRSAD) show a composition bias toward basic and acidic residues.

It belongs to the potassium channel family. S (TC 1.A.1.2) subfamily. Kv9.1/KCNS1 sub-subfamily. Heterotetramer with KCNB1. Heterotetramer with KCNB2. Does not form homomultimers.

Its subcellular location is the cell membrane. Its function is as follows. Potassium channel regulatory subunit that modulate the delayed rectifier voltage-gated potassium channel activity of KCNB1 and KCNB2 by altering their kinetics, expression levels, and shifting the half-inactivation potential to more polarized values. While it does not form functional channels on its own, it can form functional heterotetrameric channels with KCNB1 and KCNB2. Each regulatory subunit has unique regulatory properties that can lead to extensive inhibition, significant changes in kinetics, and/or substantial shifts in the voltage dependencies of the inactivation process. This Papio anubis (Olive baboon) protein is Delayed-rectifier potassium channel regulatory subunit KCNS1.